Here is a 247-residue protein sequence, read N- to C-terminus: Geranylgeranylglyceryl phosphate synthase (247 aa).

The Mg(2+) site is built by aspartate 24 and serine 53. Residues 172–178, 203–204, and 225–226 contribute to the sn-glycerol 1-phosphate site; these read YLEAGSG, GG, and GT.

Belongs to the GGGP/HepGP synthase family. Group II subfamily. Mg(2+) serves as cofactor.

Its subcellular location is the cytoplasm. It catalyses the reaction sn-glycerol 1-phosphate + (2E,6E,10E)-geranylgeranyl diphosphate = sn-3-O-(geranylgeranyl)glycerol 1-phosphate + diphosphate. It participates in membrane lipid metabolism; glycerophospholipid metabolism. In terms of biological role, prenyltransferase that catalyzes the transfer of the geranylgeranyl moiety of geranylgeranyl diphosphate (GGPP) to the C3 hydroxyl of sn-glycerol-1-phosphate (G1P). This reaction is the first ether-bond-formation step in the biosynthesis of archaeal membrane lipids. The polypeptide is Geranylgeranylglyceryl phosphate synthase (Cenarchaeum symbiosum (strain A)).